Reading from the N-terminus, the 323-residue chain is ATP synthase gamma chain (323 aa).

An insert region spans residues 206–240 (NPIVNLVGFGYKERGVKPINNRRATSDIVGESKSI).

This sequence belongs to the ATPase gamma chain family. As to quaternary structure, F-type ATPases have 2 components, CF(1) - the catalytic core - and CF(0) - the membrane proton channel. CF(1) has five subunits: alpha(3), beta(3), gamma(1), delta(1), epsilon(1). CF(0) has three main subunits: a, b and c.

The protein resides in the cell inner membrane. Functionally, produces ATP from ADP in the presence of a proton gradient across the membrane. The gamma chain is believed to be important in regulating ATPase activity and the flow of protons through the CF(0) complex. The polypeptide is ATP synthase gamma chain (Rickettsia conorii (strain ATCC VR-613 / Malish 7)).